The sequence spans 321 residues: Trem-like transcript 2 protein (321 aa).

The signal sequence occupies residues 1-18 (MAPAFLLLLLLWPQGCVS). Residues 19-268 (GPSADSVYTK…PSIRHQDVYS (250 aa)) are Extracellular-facing. In terms of domain architecture, Ig-like V-type spans 20–121 (PSADSVYTKV…ILYPLMGFQL (102 aa)). 2 disulfides stabilise this stretch: Cys-41–Cys-105 and Cys-56–Cys-63. The N-linked (GlcNAc...) asparagine glycan is linked to Asn-89. Composition is skewed to polar residues over residues 189–220 (GYSF…NARD) and 227–241 (SIST…RSPT). The segment at 189 to 241 (GYSFTATSTTSQGPRRTMGSQTVTASPSNARDSSAGPESISTKSGDLSTRSPT) is disordered. A helical membrane pass occupies residues 269-289 (TVLGVVLTLLVLMLIMVYGFW). Residues 290–321 (KKRHMASYSMCSDPSTRDPPGRPEPYVEVYLI) lie on the Cytoplasmic side of the membrane.

Interacts with CD276 and this interaction enhances T-cell activation. In terms of tissue distribution, detected in cultured B-cells, T-cell leukemia and monocyte leukemia. Expressed constitutively on CD8 T-cells and induced on CD4 T-cells after activation.

It localises to the cell membrane. In terms of biological role, cell surface receptor that may play a role in the innate and adaptive immune response. Acts as a counter-receptor for CD276 and interaction with CD276 on T-cells enhances T-cell activation. The polypeptide is Trem-like transcript 2 protein (TREML2) (Homo sapiens (Human)).